Here is a 509-residue protein sequence, read N- to C-terminus: 2,3-bisphosphoglycerate-independent phosphoglycerate mutase (509 aa).

Mn(2+) is bound by residues Asp12 and Ser62. The active-site Phosphoserine intermediate is the Ser62. Substrate is bound by residues His123, 153-154 (RD), Arg185, Arg191, 260-263 (RPDR), and Lys333. Residues Asp400, His404, Asp441, His442, and His460 each coordinate Mn(2+).

Belongs to the BPG-independent phosphoglycerate mutase family. In terms of assembly, monomer. Mn(2+) is required as a cofactor.

It carries out the reaction (2R)-2-phosphoglycerate = (2R)-3-phosphoglycerate. Its pathway is carbohydrate degradation; glycolysis; pyruvate from D-glyceraldehyde 3-phosphate: step 3/5. Its function is as follows. Catalyzes the interconversion of 2-phosphoglycerate and 3-phosphoglycerate. This Clostridium kluyveri (strain ATCC 8527 / DSM 555 / NBRC 12016 / NCIMB 10680 / K1) protein is 2,3-bisphosphoglycerate-independent phosphoglycerate mutase.